The following is a 297-amino-acid chain: Peroxisome assembly protein 12 (297 aa).

Topologically, residues 1–16 (MAEAANVRQNLQNVPS) are peroxisomal matrix. The helical transmembrane segment at 17-44 (IFEISASETLDNLIYPALSKIFDYFGLR) threads the bilayer. Residues 45-48 (LDFK) lie on the Cytoplasmic side of the membrane. The helical transmembrane segment at 49-73 (LWGSLRIQEELSPLLTWLLQYLYLR) threads the bilayer. Over 74 to 98 (KRASSFGESFYGLQRTVTTTGDLLN) the chain is Peroxisomal matrix. A helical transmembrane segment spans residues 99–119 (RRQQFASATLLTFMPYVERKL). Residues 120–124 (RTRIT) lie on the Cytoplasmic side of the membrane. The chain crosses the membrane as a helical span at residues 125–158 (RHEDTSPWEQRLLSAFHAFHAAKAAHTFFYLVKY). Residues 159–191 (ASNHSPIFRLLGLTLRYPSEPPKEDQWTYVVLK) lie on the Peroxisomal matrix side of the membrane. The helical transmembrane segment at 192–219 (MLEVLAFFLQFVQWWYSNDQRRKVGGTL) threads the bilayer. Residues 220 to 297 (INPEAMPRKQ…LDDLVRIYET (78 aa)) lie on the Cytoplasmic side of the membrane. Residues Cys-244, Cys-247, Cys-265, and Cys-268 each contribute to the Zn(2+) site. Residues 244–283 (CPVCLLSIQTPTACSVSGYVFCWKCIVSHMKEHGTCPVTH) form an RING-type; degenerate zinc finger.

Belongs to the pex2/pex10/pex12 family. Component of the PEX2-PEX10-PEX12 retrotranslocation channel.

Its subcellular location is the peroxisome membrane. Its pathway is protein modification; protein ubiquitination. Component of a retrotranslocation channel required for peroxisome organization by mediating export of the PEX5 receptor from peroxisomes to the cytosol, thereby promoting PEX5 recycling. The retrotranslocation channel is composed of PEX2, PEX10 and PEX12; each subunit contributing transmembrane segments that coassemble into an open channel that specifically allows the passage of PEX5 through the peroxisomal membrane. PEX12 also regulates PEX5 recycling by activating the E3 ubiquitin-protein ligase activity of PEX10. When PEX5 recycling is compromised, PEX12 stimulates PEX10-mediated polyubiquitination of PEX5, leading to its subsequent degradation. In Drosophila melanogaster (Fruit fly), this protein is Peroxisome assembly protein 12 (Pex12).